Here is a 70-residue protein sequence, read N- to C-terminus: Large ribosomal subunit protein bL31c (70 aa).

It belongs to the bacterial ribosomal protein bL31 family. Type A subfamily. Part of the 50S ribosomal subunit.

The protein localises to the plastid. It is found in the chloroplast. In terms of biological role, binds the 23S rRNA. This chain is Large ribosomal subunit protein bL31c, found in Pyropia yezoensis (Susabi-nori).